The following is a 338-amino-acid chain: 1-aminocyclopropane-1-carboxylate deaminase (338 aa).

At Lys51 the chain carries N6-(pyridoxal phosphate)lysine. Ser78 acts as the Nucleophile in catalysis.

Belongs to the ACC deaminase/D-cysteine desulfhydrase family. In terms of assembly, homotrimer. The cofactor is pyridoxal 5'-phosphate.

The catalysed reaction is 1-aminocyclopropane-1-carboxylate + H2O = 2-oxobutanoate + NH4(+). Its function is as follows. Catalyzes a cyclopropane ring-opening reaction, the irreversible conversion of 1-aminocyclopropane-1-carboxylate (ACC) to ammonia and alpha-ketobutyrate. Allows growth on ACC as a nitrogen source. This Pseudomonas syringae pv. tomato (strain ATCC BAA-871 / DC3000) protein is 1-aminocyclopropane-1-carboxylate deaminase.